Reading from the N-terminus, the 486-residue chain is Secreted protein C (486 aa).

An N-terminal signal peptide occupies residues 1-22 (MKINIILLFVGLILAFAVLSNA). The interval 30 to 332 (GVNPFDNNNS…SGSHGGSSSH (303 aa)) is disordered. Residue Asn-37 is glycosylated (N-linked (GlcNAc...) asparagine). Over residues 41–60 (SGSGSGSGGGSSSSGSGTGQ) the composition is skewed to gly residues. Residues 61-318 (SSGTVSSSGS…TGSSEYSSSS (258 aa)) are compositionally biased toward low complexity. Residues Asn-73, Asn-74, Asn-83, Asn-112, Asn-129, Asn-149, and Asn-174 are each glycosylated (N-linked (GlcNAc...) asparagine).

The protein belongs to the Sct family.

The protein localises to the secreted. In Dictyostelium discoideum (Social amoeba), this protein is Secreted protein C.